Consider the following 671-residue polypeptide: cGMP-dependent protein kinase 1 (671 aa).

Ser2 bears the N-acetylserine mark. Residues 2–59 (SELEEDFAKILMLKEERIKELEKRLSEKEEEIQELKRKLHKCQSVLPVPSTHIGPRTT) adopt a coiled-coil conformation. The required for dimerization stretch occupies residues 2–102 (SELEEDFAKI…LIKEAILDND (101 aa)). The tract at residues 9–44 (AKILMLKEERIKELEKRLSEKEEEIQELKRKLHKCQ) is leucine-zipper. The segment at 50-75 (PSTHIGPRTTRAQGISAEPQTYRSFH) is autoinhibitory domain. Residue Thr59 is modified to Phosphothreonine; by autocatalysis. The interval 103–220 (FMKNLELSQI…EYMEFLKSVP (118 aa)) is cGMP-binding, high affinity. 3',5'-cyclic GMP-binding positions include 167–170 (GELA), 177–178 (RT), Arg282, 291–294 (GEKA), 301–302 (RT), and Tyr336. The interval 221 to 341 (TFQSLPDEIL…SNKAYEDAEA (121 aa)) is cGMP-binding, low affinity. In terms of domain architecture, Protein kinase spans 360 to 619 (FNIIDTLGVG…VKDIQKHKWF (260 aa)). ATP is bound by residues 366–374 (LGVGGFGRV) and Lys390. Asp484 (proton acceptor) is an active-site residue. Thr515 is subject to Phosphothreonine. Residues 620 to 671 (EGFNWEGLRKGTLTPPIIPSVASPTDTSNFDSFPEDSDEPPPDDNSGWDIDF) enclose the AGC-kinase C-terminal domain. The segment at 635-671 (PIIPSVASPTDTSNFDSFPEDSDEPPPDDNSGWDIDF) is disordered. The segment covering 652–661 (FPEDSDEPPP) has biased composition (acidic residues).

The protein belongs to the protein kinase superfamily. AGC Ser/Thr protein kinase family. cGMP subfamily. As to quaternary structure, isoform alpha: parallel homodimer or heterodimer and also heterotetramer. Interacts directly with PPP1R12A. Non-covalent dimer of dimer of PRKG1-PRKG1 and PPP1R12A-PPP1R12A. This interaction targets PRKG1 to stress fibers to mediate smooth muscle cell relaxation and vasodilation in responses to rises in cGMP. Isoform beta: antiparallel homodimer. Part of cGMP kinase signaling complex at least composed of ACTA2/alpha-actin, CNN1/calponin H1, PLN/phospholamban, PRKG1 and ITPR1. Interacts with IRAG1. Forms a stable complex with ITPR1, IRAG1, and isoform beta of PRKG1. Interacts with TRPC7 (via ankyrin repeat domain). Isoform alpha interacts with RGS2. Interacts with GTF2I. Autophosphorylation increases kinase activity. Post-translationally, 65 kDa monomer is produced by proteolytic cleavage. Detected in cerebellum, hippocampus, dorsomedial hypothalamus, medulla, subcommissural organ, cerebral cortex, amygdala, habenulae, various hypothalamic regions, olfactory bulb, pituitary gland, and retina. Isoform alpha is prominent in the cerebellum and medulla, whereas isoform Beta is predominant in the cortex, hippocampus, hypothalamus, and olfactory bulb.

It localises to the cytoplasm. The enzyme catalyses L-seryl-[protein] + ATP = O-phospho-L-seryl-[protein] + ADP + H(+). It carries out the reaction L-threonyl-[protein] + ATP = O-phospho-L-threonyl-[protein] + ADP + H(+). Its activity is regulated as follows. In the absence of cGMP, PRKG1 activity is suppressed by autoinhibitory contacts. In terms of biological role, serine/threonine protein kinase that acts as a key mediator of the nitric oxide (NO)/cGMP signaling pathway. GMP binding activates PRKG1, which phosphorylates serines and threonines on many cellular proteins. Numerous protein targets for PRKG1 phosphorylation are implicated in modulating cellular calcium, but the contribution of each of these targets may vary substantially among cell types. Proteins that are phosphorylated by PRKG1 regulate platelet activation and adhesion, smooth muscle contraction, cardiac function, gene expression, feedback of the NO-signaling pathway, and other processes involved in several aspects of the CNS like axon guidance, hippocampal and cerebellar learning, circadian rhythm and nociception. Smooth muscle relaxation is mediated through lowering of intracellular free calcium, by desensitization of contractile proteins to calcium, and by decrease in the contractile state of smooth muscle or in platelet activation. Regulates intracellular calcium levels via several pathways: phosphorylates IRAG1 and inhibits IP3-induced Ca(2+) release from intracellular stores, phosphorylation of KCNMA1 (BKCa) channels decreases intracellular Ca(2+) levels, which leads to increased opening of this channel. PRKG1 phosphorylates the canonical transient receptor potential channel (TRPC) family which inactivates the associated inward calcium current. Another mode of action of NO/cGMP/PKGI signaling involves PKGI-mediated inactivation of the Ras homolog gene family member A (RhoA). Phosphorylation of RHOA by PRKG1 blocks the action of this protein in myriad processes: regulation of RHOA translocation; decreasing contraction; controlling vesicle trafficking, reduction of myosin light chain phosphorylation resulting in vasorelaxation. Activation of PRKG1 by NO signaling also alters gene expression in a number of tissues. In smooth muscle cells, increased cGMP and PRKG1 activity influence expression of smooth muscle-specific contractile proteins, levels of proteins in the NO/cGMP signaling pathway, down-regulation of the matrix proteins osteopontin and thrombospondin-1 to limit smooth muscle cell migration and phenotype. Regulates vasodilator-stimulated phosphoprotein (VASP) functions in platelets and smooth muscle. This is cGMP-dependent protein kinase 1 (Prkg1) from Mus musculus (Mouse).